The primary structure comprises 67 residues: Probable Sec-independent protein translocase protein TatE (67 aa).

A helical membrane pass occupies residues 4–21; it reads ISITKLLVVAALIVLVFG. Positions 43 to 67 are disordered; it reads MNDDDTSVKKSAEEDVPADKISHKE.

Belongs to the TatA/E family. TatE subfamily.

Its subcellular location is the cell inner membrane. In terms of biological role, part of the twin-arginine translocation (Tat) system that transports large folded proteins containing a characteristic twin-arginine motif in their signal peptide across membranes. TatE shares overlapping functions with TatA. The sequence is that of Probable Sec-independent protein translocase protein TatE from Enterobacter lignolyticus (strain SCF1).